We begin with the raw amino-acid sequence, 169 residues long: Probable chemoreceptor glutamine deamidase CheD (169 aa).

Belongs to the CheD family.

The enzyme catalyses L-glutaminyl-[protein] + H2O = L-glutamyl-[protein] + NH4(+). Functionally, probably deamidates glutamine residues to glutamate on methyl-accepting chemotaxis receptors (MCPs), playing an important role in chemotaxis. The sequence is that of Probable chemoreceptor glutamine deamidase CheD from Solibacter usitatus (strain Ellin6076).